A 228-amino-acid polypeptide reads, in one-letter code: Auxin-responsive protein IAA16 (228 aa).

The EAR-like (transcriptional repression) motif lies at 19 to 23 (LSLAL). Polar residues predominate over residues 28-39 (SSSGLQGNTSTA). Disordered regions lie at residues 28–57 (SSSGLQGNTSTAADGAKGNDGFKASRPAAP) and 70–90 (NLASSSSSSKPPRGGRDAAAA). The region spanning 97–214 (ARFVKVNMDG…RVLRSSDLNA (118 aa)) is the PB1 domain.

This sequence belongs to the Aux/IAA family. As to quaternary structure, homodimers and heterodimers. As to expression, expressed in roots, flowers and seedlings.

It is found in the nucleus. In terms of biological role, aux/IAA proteins are short-lived transcriptional factors that function as repressors of early auxin response genes at low auxin concentrations. The protein is Auxin-responsive protein IAA16 (IAA16) of Oryza sativa subsp. japonica (Rice).